Here is a 1020-residue protein sequence, read N- to C-terminus: Valine--tRNA ligase (1020 aa).

The 'HIGH' region signature appears at 45 to 55 (PNVTGALHVGH). Positions 661–665 (KMSKT) match the 'KMSKS' region motif. Lys-664 lines the ATP pocket. Positions 955 to 1020 (AEKDRLEKAK…EALARLAELG (66 aa)) form a coiled coil.

The protein belongs to the class-I aminoacyl-tRNA synthetase family. ValS type 1 subfamily. As to quaternary structure, monomer.

Its subcellular location is the cytoplasm. It catalyses the reaction tRNA(Val) + L-valine + ATP = L-valyl-tRNA(Val) + AMP + diphosphate. In terms of biological role, catalyzes the attachment of valine to tRNA(Val). As ValRS can inadvertently accommodate and process structurally similar amino acids such as threonine, to avoid such errors, it has a 'posttransfer' editing activity that hydrolyzes mischarged Thr-tRNA(Val) in a tRNA-dependent manner. In Ruegeria pomeroyi (strain ATCC 700808 / DSM 15171 / DSS-3) (Silicibacter pomeroyi), this protein is Valine--tRNA ligase.